A 136-amino-acid chain; its full sequence is MFDIGFPELALVAVIGLLVLGPERLPYAARKTGLWVGRIRRMVSQMSSEIDRQLKAEEMRERLRKEGDTLGLEKIQQTVNEALAEAKKYEDMVEKNPATPMSSKASTPQTPSSGPDPQPVESHSHSDDASKQHDRS.

A helical transmembrane segment spans residues 1–21 (MFDIGFPELALVAVIGLLVLG). Residues 89-136 (YEDMVEKNPATPMSSKASTPQTPSSGPDPQPVESHSHSDDASKQHDRS) are disordered. Residues 99-115 (TPMSSKASTPQTPSSGP) show a composition bias toward polar residues. Residues 122–136 (SHSHSDDASKQHDRS) are compositionally biased toward basic and acidic residues.

The protein belongs to the TatB family. As to quaternary structure, the Tat system comprises two distinct complexes: a TatABC complex, containing multiple copies of TatA, TatB and TatC subunits, and a separate TatA complex, containing only TatA subunits. Substrates initially bind to the TatABC complex, which probably triggers association of the separate TatA complex to form the active translocon.

Its subcellular location is the cell inner membrane. In terms of biological role, part of the twin-arginine translocation (Tat) system that transports large folded proteins containing a characteristic twin-arginine motif in their signal peptide across membranes. Together with TatC, TatB is part of a receptor directly interacting with Tat signal peptides. TatB may form an oligomeric binding site that transiently accommodates folded Tat precursor proteins before their translocation. This is Sec-independent protein translocase protein TatB from Hahella chejuensis (strain KCTC 2396).